The chain runs to 95 residues: Large ribosomal subunit protein bL25 (95 aa).

It belongs to the bacterial ribosomal protein bL25 family. As to quaternary structure, part of the 50S ribosomal subunit; part of the 5S rRNA/L5/L18/L25 subcomplex. Contacts the 5S rRNA. Binds to the 5S rRNA independently of L5 and L18.

In terms of biological role, this is one of the proteins that binds to the 5S RNA in the ribosome where it forms part of the central protuberance. The sequence is that of Large ribosomal subunit protein bL25 from Shewanella frigidimarina (strain NCIMB 400).